Reading from the N-terminus, the 282-residue chain is Phosphatidylglycerol--prolipoprotein diacylglyceryl transferase (282 aa).

4 helical membrane-spanning segments follow: residues 19–39 (IGPI…LIGV), 59–79 (LSIW…VLFQ), 90–110 (IIAI…GTLA), and 120–140 (VPFW…QAIG). Residue Arg-141 coordinates a 1,2-diacyl-sn-glycero-3-phospho-(1'-sn-glycerol). 3 helical membrane passes run 181–201 (TFLY…TLFF), 212–232 (VGTL…WIEG), and 245–265 (IAQV…AWLY).

This sequence belongs to the Lgt family.

The protein localises to the cell inner membrane. The catalysed reaction is L-cysteinyl-[prolipoprotein] + a 1,2-diacyl-sn-glycero-3-phospho-(1'-sn-glycerol) = an S-1,2-diacyl-sn-glyceryl-L-cysteinyl-[prolipoprotein] + sn-glycerol 1-phosphate + H(+). Its pathway is protein modification; lipoprotein biosynthesis (diacylglyceryl transfer). Catalyzes the transfer of the diacylglyceryl group from phosphatidylglycerol to the sulfhydryl group of the N-terminal cysteine of a prolipoprotein, the first step in the formation of mature lipoproteins. The sequence is that of Phosphatidylglycerol--prolipoprotein diacylglyceryl transferase from Trichormus variabilis (strain ATCC 29413 / PCC 7937) (Anabaena variabilis).